The sequence spans 549 residues: TBC1 domain family member 3L (549 aa).

The Rab-GAP TBC domain occupies 101–293 (GMPMNIRGPM…RLWDVYLVEG (193 aa)). 2 S-palmitoyl cysteine lipidation sites follow: Cys318 and Cys325. The tract at residues 350 to 423 (LTRKQGDLQP…TPCPGGAVRE (74 aa)) is disordered. Residues 398 to 417 (PRPIWSASPPRAPRSSTPCP) are compositionally biased toward low complexity.

Ubiquitinated by a CUL7-based E3 ligase, which leads to proteasomal degradation. Post-translationally, palmitoylation is required for membrane localization and protects TBC1D3 from ubiquitination.

The protein resides in the cell membrane. Functionally, acts as a GTPase activating protein for RAB5. Does not act on RAB4 or RAB11. The polypeptide is TBC1 domain family member 3L (Homo sapiens (Human)).